A 377-amino-acid polypeptide reads, in one-letter code: Probable protein phosphatase 2C 7 (377 aa).

2 disordered regions span residues 1–68 (MAAH…GKAA) and 80–99 (TTVA…EDDE). Low complexity predominate over residues 21-39 (PPAAEAEAAAAAAAIARAA). A compositionally biased stretch (basic residues) spans 51–63 (GVRHPLKHRRFRA). The span at 80 to 89 (TTVAEATATG) shows a compositional bias: low complexity. Positions 115–361 (SCGYSSFRGR…DNITCIVVKF (247 aa)) constitute a PPM-type phosphatase domain. Mn(2+)-binding residues include Asp-151, Gly-152, Asp-313, and Asp-352.

The protein belongs to the PP2C family. Mg(2+) is required as a cofactor. The cofactor is Mn(2+).

The enzyme catalyses O-phospho-L-seryl-[protein] + H2O = L-seryl-[protein] + phosphate. It catalyses the reaction O-phospho-L-threonyl-[protein] + H2O = L-threonyl-[protein] + phosphate. The sequence is that of Probable protein phosphatase 2C 7 from Oryza sativa subsp. japonica (Rice).